Reading from the N-terminus, the 284-residue chain is tRNA-splicing endonuclease (284 aa).

Active-site residues include Y222, H229, and K257.

The protein belongs to the tRNA-intron endonuclease family. Archaeal long subfamily. In terms of assembly, homodimer.

It catalyses the reaction pretRNA = a 3'-half-tRNA molecule with a 5'-OH end + a 5'-half-tRNA molecule with a 2',3'-cyclic phosphate end + an intron with a 2',3'-cyclic phosphate and a 5'-hydroxyl terminus.. In terms of biological role, endonuclease that removes tRNA introns. Cleaves pre-tRNA at the 5'- and 3'-splice sites to release the intron. The products are an intron and two tRNA half-molecules bearing 2',3' cyclic phosphate and 5'-OH termini. Recognizes a pseudosymmetric substrate in which 2 bulged loops of 3 bases are separated by a stem of 4 bp. The protein is tRNA-splicing endonuclease of Picrophilus torridus (strain ATCC 700027 / DSM 9790 / JCM 10055 / NBRC 100828 / KAW 2/3).